Here is a 545-residue protein sequence, read N- to C-terminus: La-related protein 6B (545 aa).

Positions 1 to 10 (MADQQTLDSS) are enriched in polar residues. Disordered regions lie at residues 1–76 (MADQ…IPPP), 105–187 (LVPV…DSKT), and 382–545 (HQTK…VQAE). Residues 23–49 (SHSTSSTTSASSSSDPSLLRSLSLSRL) are compositionally biased toward low complexity. Residues 61-76 (TTPPLPQPPRMIIPPP) show a composition bias toward pro residues. Basic residues predominate over residues 111 to 126 (HHPHHRFHQHHHHNRH). A compositionally biased stretch (basic and acidic residues) spans 154-173 (LVSKKNDRRDHSKRESKNDQ). Polar residues predominate over residues 174–185 (VTETGASVSIDS). Residues 187–278 (TGLPEDSIQK…RRISPITESA (92 aa)) enclose the HTH La-type RNA-binding domain. Residues 285-383 (RIIVAENLPE…LKVRLMLKHQ (99 aa)) enclose the RRM domain. Over residues 448 to 464 (GQRKGRNRGRGKGRGRG) the composition is skewed to basic residues. A compositionally biased stretch (low complexity) spans 465–478 (QPHQNQNQNNNHSH). Basic residues predominate over residues 479-497 (NQNHNHNGRGNHHHHHHHQ). The span at 498-509 (VGTQPSNNPMNN) shows a compositional bias: polar residues. Low complexity predominate over residues 510 to 519 (MEQPGMGKQQ).

The protein resides in the nucleus. Its function is as follows. Transcriptional regulator. This chain is La-related protein 6B (LARP6B), found in Arabidopsis thaliana (Mouse-ear cress).